The chain runs to 45 residues: Large ribosomal subunit protein bL34 (45 aa).

The protein belongs to the bacterial ribosomal protein bL34 family.

This chain is Large ribosomal subunit protein bL34, found in Corynebacterium urealyticum (strain ATCC 43042 / DSM 7109).